The sequence spans 141 residues: 3-hydroxyacyl-[acyl-carrier-protein] dehydratase FabZ (141 aa).

Residue His49 is part of the active site.

This sequence belongs to the thioester dehydratase family. FabZ subfamily.

It localises to the cytoplasm. It catalyses the reaction a (3R)-hydroxyacyl-[ACP] = a (2E)-enoyl-[ACP] + H2O. In terms of biological role, involved in unsaturated fatty acids biosynthesis. Catalyzes the dehydration of short chain beta-hydroxyacyl-ACPs and long chain saturated and unsaturated beta-hydroxyacyl-ACPs. The chain is 3-hydroxyacyl-[acyl-carrier-protein] dehydratase FabZ from Clostridium acetobutylicum (strain ATCC 824 / DSM 792 / JCM 1419 / IAM 19013 / LMG 5710 / NBRC 13948 / NRRL B-527 / VKM B-1787 / 2291 / W).